Consider the following 302-residue polypeptide: MPINIPINLPAKQILESENIFVMDEKRAFHQDIRPLNIVILNLMPQKIKTETQLLRMLGNSPLQVYFTFLIPSTHTPKHTPRQHLEQFYTTFSSIRDRKFDGMIITGAPIEHLEYEEVSYWEELREILDWSKTHVTSTLHICWGAQAGLYHHYGIRKVKLPKKTFGVFEHRIMEKNERLVRGFEEFYYVPHSRHTDINMDDLKAVSHLKVLSISDEAGVCLIASKDEKQVFLTGHPEYDTDTLKEEYERDLARNMEIDPPVNYFKEGPDGAVPVNRWKAHATLLFMNWLNYYVYQETPYEWK.

Cys142 (acyl-thioester intermediate) is an active-site residue. Residues Lys163 and Ser192 each contribute to the substrate site. His235 functions as the Proton acceptor in the catalytic mechanism. Residue Glu237 is part of the active site. Residue Arg249 coordinates substrate.

It belongs to the MetA family.

It is found in the cytoplasm. The catalysed reaction is L-homoserine + acetyl-CoA = O-acetyl-L-homoserine + CoA. Its pathway is amino-acid biosynthesis; L-methionine biosynthesis via de novo pathway; O-acetyl-L-homoserine from L-homoserine: step 1/1. Its function is as follows. Transfers an acetyl group from acetyl-CoA to L-homoserine, forming acetyl-L-homoserine. In Bacillus licheniformis (strain ATCC 14580 / DSM 13 / JCM 2505 / CCUG 7422 / NBRC 12200 / NCIMB 9375 / NCTC 10341 / NRRL NRS-1264 / Gibson 46), this protein is Homoserine O-acetyltransferase.